The chain runs to 259 residues: Thiazole synthase (259 aa).

Lys98 serves as the catalytic Schiff-base intermediate with DXP. Residues Gly159, 185-186, and 207-208 each bind 1-deoxy-D-xylulose 5-phosphate; these read AG and NS.

This sequence belongs to the ThiG family. In terms of assembly, homotetramer. Forms heterodimers with either ThiH or ThiS.

It is found in the cytoplasm. The catalysed reaction is [ThiS sulfur-carrier protein]-C-terminal-Gly-aminoethanethioate + 2-iminoacetate + 1-deoxy-D-xylulose 5-phosphate = [ThiS sulfur-carrier protein]-C-terminal Gly-Gly + 2-[(2R,5Z)-2-carboxy-4-methylthiazol-5(2H)-ylidene]ethyl phosphate + 2 H2O + H(+). The protein operates within cofactor biosynthesis; thiamine diphosphate biosynthesis. Functionally, catalyzes the rearrangement of 1-deoxy-D-xylulose 5-phosphate (DXP) to produce the thiazole phosphate moiety of thiamine. Sulfur is provided by the thiocarboxylate moiety of the carrier protein ThiS. In vitro, sulfur can be provided by H(2)S. The protein is Thiazole synthase of Chlorobium limicola (strain DSM 245 / NBRC 103803 / 6330).